Reading from the N-terminus, the 172-residue chain is 5'(3')-deoxyribonucleotidase (172 aa).

The Nucleophile role is filled by Asp-8. Mg(2+) is bound by residues Asp-8, Asp-10, and Asp-132. Asp-10 (proton donor) is an active-site residue.

It belongs to the 5'(3')-deoxyribonucleotidase family. Mg(2+) is required as a cofactor.

Functionally, dephosphorylates nucleoside monophosphates such as the 5' and 2'(3')-phosphates of deoxyribonucleotides in vitro. Also catalyzes the dephosphorylation of coenzyme A (CoA), pyridoxal-5'-phosphate (PLP), riboflavine-5-phosphate (FMN) and nicotinamide adenine dinucleotide phosphate (NADP) in vitro. The protein is 5'(3')-deoxyribonucleotidase (yorS) of Bacillus subtilis (strain 168).